A 486-amino-acid chain; its full sequence is Malonate-semialdehyde dehydrogenase (486 aa).

The NAD(+) site is built by Phe154, Lys178, Glu181, Arg182, and Ser231. Cys286 (nucleophile) is an active-site residue. Glu386 serves as a coordination point for NAD(+).

Belongs to the aldehyde dehydrogenase family. IolA subfamily. Homotetramer.

The catalysed reaction is 3-oxopropanoate + NAD(+) + CoA + H2O = hydrogencarbonate + acetyl-CoA + NADH + H(+). It catalyses the reaction 2-methyl-3-oxopropanoate + NAD(+) + CoA + H2O = propanoyl-CoA + hydrogencarbonate + NADH + H(+). It participates in polyol metabolism; myo-inositol degradation into acetyl-CoA; acetyl-CoA from myo-inositol: step 7/7. Catalyzes the oxidation of malonate semialdehyde (MSA) and methylmalonate semialdehyde (MMSA) into acetyl-CoA and propanoyl-CoA, respectively. Is involved in a myo-inositol catabolic pathway. Bicarbonate, and not CO2, is the end-product of the enzymatic reaction. The chain is Malonate-semialdehyde dehydrogenase from Bacillus pumilus (strain SAFR-032).